A 101-amino-acid chain; its full sequence is UPF0473 protein STER_1939 (101 aa).

It belongs to the UPF0473 family.

The protein is UPF0473 protein STER_1939 of Streptococcus thermophilus (strain ATCC BAA-491 / LMD-9).